A 568-amino-acid chain; its full sequence is Glycine--tRNA ligase (568 aa).

Arginine 97 and glutamate 163 together coordinate substrate. ATP contacts are provided by residues arginine 195–glutamate 197, isoleucine 205–phenylalanine 210, glutamate 322–cysteine 323, and glycine 441–arginine 444. Substrate is bound at residue phenylalanine 210–glutamate 214. Glutamate 437–glycine 441 is a substrate binding site.

This sequence belongs to the class-II aminoacyl-tRNA synthetase family.

The protein resides in the cytoplasm. The catalysed reaction is tRNA(Gly) + glycine + ATP = glycyl-tRNA(Gly) + AMP + diphosphate. Its function is as follows. Catalyzes the attachment of glycine to tRNA(Gly). This is Glycine--tRNA ligase from Pyrococcus furiosus (strain ATCC 43587 / DSM 3638 / JCM 8422 / Vc1).